The following is a 391-amino-acid chain: Phosphopentomutase (391 aa).

A Mn(2+)-binding site is contributed by aspartate 14. The segment at 61–88 is disordered; the sequence is IQGVPPDPAPTAFHGRMAERSEGKDTTT. Positions 76-87 are enriched in basic and acidic residues; sequence RMAERSEGKDTT. Mn(2+) is bound by residues aspartate 286, histidine 291, aspartate 327, histidine 328, and histidine 339.

The protein belongs to the phosphopentomutase family. Requires Mn(2+) as cofactor.

The protein localises to the cytoplasm. It carries out the reaction 2-deoxy-alpha-D-ribose 1-phosphate = 2-deoxy-D-ribose 5-phosphate. The enzyme catalyses alpha-D-ribose 1-phosphate = D-ribose 5-phosphate. It functions in the pathway carbohydrate degradation; 2-deoxy-D-ribose 1-phosphate degradation; D-glyceraldehyde 3-phosphate and acetaldehyde from 2-deoxy-alpha-D-ribose 1-phosphate: step 1/2. Isomerase that catalyzes the conversion of deoxy-ribose 1-phosphate (dRib-1-P) and ribose 1-phosphate (Rib-1-P) to deoxy-ribose 5-phosphate (dRib-5-P) and ribose 5-phosphate (Rib-5-P), respectively. The polypeptide is Phosphopentomutase (Anaeromyxobacter dehalogenans (strain 2CP-C)).